We begin with the raw amino-acid sequence, 132 residues long: uncharacterized protein (132 aa).

The protein belongs to the mycobacterial PPE family.

This is an uncharacterized protein from Mycobacterium tuberculosis (strain ATCC 25618 / H37Rv).